Reading from the N-terminus, the 371-residue chain is Bifunctional enzyme IspD/IspF (371 aa).

The interval 1-210 (MSEMSLIMLA…LNLPTPSFEI (210 aa)) is 2-C-methyl-D-erythritol 4-phosphate cytidylyltransferase. Residues 211 to 371 (FTGNGFDVHE…NLKYFDWTRL (161 aa)) are 2-C-methyl-D-erythritol 2,4-cyclodiphosphate synthase. A divalent metal cation is bound by residues Asp217 and His219. 4-CDP-2-C-methyl-D-erythritol 2-phosphate-binding positions include 217–219 (DVH) and 243–244 (HS). His251 contacts a divalent metal cation. 4-CDP-2-C-methyl-D-erythritol 2-phosphate-binding positions include 265 to 267 (DIG), 270 to 274 (YPDTD), 341 to 344 (TTTE), Phe348, and Arg351.

In the N-terminal section; belongs to the IspD/TarI cytidylyltransferase family. IspD subfamily. It in the C-terminal section; belongs to the IspF family. A divalent metal cation serves as cofactor.

The enzyme catalyses 2-C-methyl-D-erythritol 4-phosphate + CTP + H(+) = 4-CDP-2-C-methyl-D-erythritol + diphosphate. It catalyses the reaction 4-CDP-2-C-methyl-D-erythritol 2-phosphate = 2-C-methyl-D-erythritol 2,4-cyclic diphosphate + CMP. Its pathway is isoprenoid biosynthesis; isopentenyl diphosphate biosynthesis via DXP pathway; isopentenyl diphosphate from 1-deoxy-D-xylulose 5-phosphate: step 2/6. The protein operates within isoprenoid biosynthesis; isopentenyl diphosphate biosynthesis via DXP pathway; isopentenyl diphosphate from 1-deoxy-D-xylulose 5-phosphate: step 4/6. Bifunctional enzyme that catalyzes the formation of 4-diphosphocytidyl-2-C-methyl-D-erythritol from CTP and 2-C-methyl-D-erythritol 4-phosphate (MEP) (IspD), and catalyzes the conversion of 4-diphosphocytidyl-2-C-methyl-D-erythritol 2-phosphate (CDP-ME2P) to 2-C-methyl-D-erythritol 2,4-cyclodiphosphate (ME-CPP) with a corresponding release of cytidine 5-monophosphate (CMP) (IspF). This chain is Bifunctional enzyme IspD/IspF, found in Campylobacter jejuni (strain RM1221).